The primary structure comprises 197 residues: Imidazoleglycerol-phosphate dehydratase (197 aa).

The protein belongs to the imidazoleglycerol-phosphate dehydratase family.

Its subcellular location is the cytoplasm. The catalysed reaction is D-erythro-1-(imidazol-4-yl)glycerol 3-phosphate = 3-(imidazol-4-yl)-2-oxopropyl phosphate + H2O. It functions in the pathway amino-acid biosynthesis; L-histidine biosynthesis; L-histidine from 5-phospho-alpha-D-ribose 1-diphosphate: step 6/9. The sequence is that of Imidazoleglycerol-phosphate dehydratase from Thermobifida fusca (strain YX).